The sequence spans 956 residues: Pollen-specific leucine-rich repeat extensin-like protein 1 (956 aa).

A signal peptide spans 1–30; it reads MTRRTMEKPFGCFLLLFCFTISIFFYSAAA. LRR repeat units lie at residues 39–59, 60–84, 119–143, 144–166, 168–191, 192–215, 217–238, 240–261, 262–285, 287–309, and 310–332; these read LTRRQLLALSENGDLPDDIEY, EVDLDLKFANNRLKRAYIALQAWKK, VLVVAGIDLNHADIAGYLPPELGLL, TDVALFHVNSNRFCGVIPKSLSK, TLMYEFDVSNNRFVGPFPTVALSW, PSLKFLDIRYNDFEGKLPPEIFDK, LDAIFLNNNRFESTIPETIGKS, ASVVTFAHNKFSGCIPKTIGQM, KNLNEIVFIGNNLSGCLPNEIGSL, NVTVFDASSNGFVGSLPSTLSGL, and ANVEQMDFSYNKFTGFVTDNICK. N-linked (GlcNAc...) asparagine glycans are attached at residues Asn-273 and Asn-287. Asn-338 carries N-linked (GlcNAc...) asparagine glycosylation. The span at 355–377 shows a compositional bias: polar residues; it reads PGSSQEKQFDDTSNCLQNRPNQK. 2 disordered regions span residues 355–380 and 397–956; these read PGSSQEKQFDDTSNCLQNRPNQKSAK and CAGG…FPGY. Residues 408 to 417 show a composition bias toward pro residues; the sequence is SPKPTPTPKA. 2 stretches are compositionally biased toward basic and acidic residues: residues 431-441 and 452-534; these read EPSKPKPEESP and TPSH…EESP. A compositionally biased stretch (pro residues) spans 640–830; sequence QSPPVHSPPP…KPVTPLPPAT (191 aa). The tract at residues 651-956 is contains the Ser-Pro(4) repeats; sequence PPVHSPPPPV…SPPPPMFPGY (306 aa). Polar residues predominate over residues 837–852; sequence PTPSSSESGEISTPVQ. Positions 947–956 are enriched in pro residues; it reads SPPPPMFPGY.

Hydroxylated on proline residues in the S-P-P-P-P repeat. Post-translationally, O-glycosylated on hydroxyprolines. As to expression, expressed in flowers, stamen, pollen, and pollinated carpels.

Its subcellular location is the secreted. It is found in the cell wall. Functionally, modulates cell morphogenesis by regulating cell wall formation and assembly, and/or growth polarization. The protein is Pollen-specific leucine-rich repeat extensin-like protein 1 (PEX1) of Arabidopsis thaliana (Mouse-ear cress).